A 143-amino-acid polypeptide reads, in one-letter code: Large ribosomal subunit protein uL11 (143 aa).

This sequence belongs to the universal ribosomal protein uL11 family. Part of the ribosomal stalk of the 50S ribosomal subunit. Interacts with L10 and the large rRNA to form the base of the stalk. L10 forms an elongated spine to which L12 dimers bind in a sequential fashion forming a multimeric L10(L12)X complex. Post-translationally, one or more lysine residues are methylated.

Functionally, forms part of the ribosomal stalk which helps the ribosome interact with GTP-bound translation factors. The sequence is that of Large ribosomal subunit protein uL11 from Beutenbergia cavernae (strain ATCC BAA-8 / DSM 12333 / CCUG 43141 / JCM 11478 / NBRC 16432 / NCIMB 13614 / HKI 0122).